The following is a 634-amino-acid chain: ABC transporter B family member 29, chloroplastic (634 aa).

The transit peptide at methionine 1 to arginine 51 directs the protein to the chloroplast. 6 helical membrane passes run threonine 75–proline 95, leucine 119–leucine 139, leucine 195–valine 215, alanine 219–glycine 239, isoleucine 307–alanine 327, and serine 330–valine 350. Residues leucine 77 to glutamine 362 form the ABC transmembrane type-1 domain. The ABC transporter domain occupies valine 396–valine 633. Position 430–437 (glycine 430–threonine 437) interacts with ATP.

This sequence belongs to the ABC transporter superfamily. ABCB family. Multidrug resistance exporter (TC 3.A.1.201) subfamily.

It is found in the plastid. Its subcellular location is the chloroplast membrane. The polypeptide is ABC transporter B family member 29, chloroplastic (ABCB29) (Arabidopsis thaliana (Mouse-ear cress)).